We begin with the raw amino-acid sequence, 393 residues long: Riboflavin biosynthesis protein RibBA (393 aa).

The segment at methionine 1–alanine 200 is DHBP synthase. Residues arginine 27 to glutamate 28, aspartate 32, arginine 139 to threonine 143, and glutamate 163 contribute to the D-ribulose 5-phosphate site. Mg(2+) is bound at residue glutamate 28. Residue histidine 142 coordinates Mg(2+). Residues valine 201–isoleucine 393 form a GTP cyclohydrolase II region. Position 249-253 (arginine 249–alanine 253) interacts with GTP. Residues cysteine 254, cysteine 265, and cysteine 267 each coordinate Zn(2+). GTP is bound by residues glutamine 270, glutamate 291–arginine 293, and threonine 313. Aspartate 325 acts as the Proton acceptor; for GTP cyclohydrolase activity in catalysis. The active-site Nucleophile; for GTP cyclohydrolase activity is the arginine 327. GTP is bound by residues serine 348 and lysine 353.

This sequence in the N-terminal section; belongs to the DHBP synthase family. It in the C-terminal section; belongs to the GTP cyclohydrolase II family. The cofactor is Mg(2+). It depends on Mn(2+) as a cofactor. Zn(2+) is required as a cofactor.

It catalyses the reaction D-ribulose 5-phosphate = (2S)-2-hydroxy-3-oxobutyl phosphate + formate + H(+). The enzyme catalyses GTP + 4 H2O = 2,5-diamino-6-hydroxy-4-(5-phosphoribosylamino)-pyrimidine + formate + 2 phosphate + 3 H(+). Its pathway is cofactor biosynthesis; riboflavin biosynthesis; 2-hydroxy-3-oxobutyl phosphate from D-ribulose 5-phosphate: step 1/1. The protein operates within cofactor biosynthesis; riboflavin biosynthesis; 5-amino-6-(D-ribitylamino)uracil from GTP: step 1/4. Catalyzes the conversion of D-ribulose 5-phosphate to formate and 3,4-dihydroxy-2-butanone 4-phosphate. In terms of biological role, catalyzes the conversion of GTP to 2,5-diamino-6-ribosylamino-4(3H)-pyrimidinone 5'-phosphate (DARP), formate and pyrophosphate. This chain is Riboflavin biosynthesis protein RibBA, found in Staphylococcus epidermidis (strain ATCC 35984 / DSM 28319 / BCRC 17069 / CCUG 31568 / BM 3577 / RP62A).